We begin with the raw amino-acid sequence, 321 residues long: Cytochrome f (321 aa).

Positions 1 to 35 (MQNTNTLNWINKLIYLSISIPIFFLILVTTYPNSV) are cleaved as a signal peptide. 4 residues coordinate heme: Y38, C58, C61, and H62. A helical membrane pass occupies residues 287–307 (MEGLILFFISVILAQVFLVLK).

The protein belongs to the cytochrome f family. In terms of assembly, the 4 large subunits of the cytochrome b6-f complex are cytochrome b6, subunit IV (17 kDa polypeptide, petD), cytochrome f and the Rieske protein, while the 4 small subunits are PetG, PetL, PetM and PetN. The complex functions as a dimer. Heme is required as a cofactor.

Its subcellular location is the plastid. It is found in the chloroplast thylakoid membrane. Functionally, component of the cytochrome b6-f complex, which mediates electron transfer between photosystem II (PSII) and photosystem I (PSI), cyclic electron flow around PSI, and state transitions. The chain is Cytochrome f from Chara vulgaris (Common stonewort).